A 986-amino-acid chain; its full sequence is Mediator of RNA polymerase II transcription subunit 24 (986 aa).

6 consecutive short sequence motifs (LXXLL motif) follow at residues 128–132, 341–345, 445–449, 554–558, 785–789, and 855–859; these read LNWLL, LTPLL, LDLLL, LVALL, LPNLL, and LMRLL.

The protein belongs to the Mediator complex subunit 24 family. As to quaternary structure, component of the Mediator complex.

Its subcellular location is the nucleus. Its function is as follows. Component of the Mediator complex, a coactivator involved in the regulated transcription of nearly all RNA polymerase II-dependent genes. Mediator functions as a bridge to convey information from gene-specific regulatory proteins to the basal RNA polymerase II transcription machinery. Mediator is recruited to promoters by direct interactions with regulatory proteins and serves as a scaffold for the assembly of a functional preinitiation complex with RNA polymerase II and the general transcription factors. This chain is Mediator of RNA polymerase II transcription subunit 24 (MED24), found in Gallus gallus (Chicken).